The sequence spans 212 residues: ATP-dependent dethiobiotin synthetase BioD (212 aa).

13–18 (GVGKTV) is an ATP binding site. Thr-17 serves as a coordination point for Mg(2+). Lys-33 is a catalytic residue. Glu-100 provides a ligand contact to Mg(2+). ATP is bound by residues 100-103 (EGAG) and 184-186 (PHL).

This sequence belongs to the dethiobiotin synthetase family. As to quaternary structure, homodimer. Mg(2+) serves as cofactor.

Its subcellular location is the cytoplasm. The enzyme catalyses (7R,8S)-7,8-diammoniononanoate + CO2 + ATP = (4R,5S)-dethiobiotin + ADP + phosphate + 3 H(+). It functions in the pathway cofactor biosynthesis; biotin biosynthesis; biotin from 7,8-diaminononanoate: step 1/2. In terms of biological role, catalyzes a mechanistically unusual reaction, the ATP-dependent insertion of CO2 between the N7 and N8 nitrogen atoms of 7,8-diaminopelargonic acid (DAPA, also called 7,8-diammoniononanoate) to form a ureido ring. The chain is ATP-dependent dethiobiotin synthetase BioD from Rhodopseudomonas palustris (strain BisB5).